Reading from the N-terminus, the 478-residue chain is V-type ATP synthase beta chain (478 aa).

This sequence belongs to the ATPase alpha/beta chains family.

Produces ATP from ADP in the presence of a proton gradient across the membrane. The V-type beta chain is a regulatory subunit. In Thermus thermophilus (strain ATCC BAA-163 / DSM 7039 / HB27), this protein is V-type ATP synthase beta chain.